We begin with the raw amino-acid sequence, 256 residues long: uncharacterized protein (256 aa).

The protein to B.subtilis LplA.

This is an uncharacterized protein from Niallia circulans (Bacillus circulans).